The primary structure comprises 493 residues: Probable cytosol aminopeptidase (493 aa).

2 residues coordinate Mn(2+): K257 and D262. The active site involves K269. 3 residues coordinate Mn(2+): D281, D341, and E343. The active site involves R345.

Belongs to the peptidase M17 family. Mn(2+) serves as cofactor.

Its subcellular location is the cytoplasm. The enzyme catalyses Release of an N-terminal amino acid, Xaa-|-Yaa-, in which Xaa is preferably Leu, but may be other amino acids including Pro although not Arg or Lys, and Yaa may be Pro. Amino acid amides and methyl esters are also readily hydrolyzed, but rates on arylamides are exceedingly low.. It carries out the reaction Release of an N-terminal amino acid, preferentially leucine, but not glutamic or aspartic acids.. Presumably involved in the processing and regular turnover of intracellular proteins. Catalyzes the removal of unsubstituted N-terminal amino acids from various peptides. In Prochlorococcus marinus (strain MIT 9211), this protein is Probable cytosol aminopeptidase.